Reading from the N-terminus, the 571-residue chain is Sulfite reductase [NADPH] hemoprotein beta-component (571 aa).

[4Fe-4S] cluster is bound by residues Cys435, Cys441, Cys480, and Cys484. Cys484 contacts siroheme.

Belongs to the nitrite and sulfite reductase 4Fe-4S domain family. Alpha(8)-beta(8). The alpha component is a flavoprotein, the beta component is a hemoprotein. The cofactor is siroheme. It depends on [4Fe-4S] cluster as a cofactor.

It catalyses the reaction hydrogen sulfide + 3 NADP(+) + 3 H2O = sulfite + 3 NADPH + 4 H(+). The protein operates within sulfur metabolism; hydrogen sulfide biosynthesis; hydrogen sulfide from sulfite (NADPH route): step 1/1. In terms of biological role, component of the sulfite reductase complex that catalyzes the 6-electron reduction of sulfite to sulfide. This is one of several activities required for the biosynthesis of L-cysteine from sulfate. This Serratia proteamaculans (strain 568) protein is Sulfite reductase [NADPH] hemoprotein beta-component.